A 674-amino-acid polypeptide reads, in one-letter code: Kinesin-like protein KIFC1 (674 aa).

Phosphoserine is present on residues Ser28, Ser33, and Ser35. A disordered region spans residues 66 to 96 (TSRPRGPLLSTVSQTQGHTAAQKGPKKTGPR). Polar residues predominate over residues 75 to 84 (STVSQTQGHT). Residues 146–315 (DLNEELKRYR…QELKGNIRVF (170 aa)) adopt a coiled-coil conformation. A Kinesin motor domain is found at 311–664 (NIRVFCRVRP…LRFASKVNQC (354 aa)). Positions 327–366 (TPSPGFLVFPPGPAGPSDPPTGLSLSRSDDRRSTLTGAPA) are disordered. The span at 336–345 (PPGPAGPSDP) shows a compositional bias: pro residues. Thr360 is modified (phosphothreonine). 411–418 (GQTGSGKT) contributes to the ATP binding site.

It belongs to the TRAFAC class myosin-kinesin ATPase superfamily. Kinesin family. NCD subfamily. In terms of assembly, binds NUBP1 and NUBP2. Interacts with PPP1R42. As to expression, highly expressed in 14 dpc embryos, spleen and NIH3T3 cells. Also expressed in testis, brain, lung, kidney and cultured astrocytes. Very low levels in skeletal muscle and heart.

It localises to the nucleus. Its subcellular location is the cytoplasm. The protein resides in the cytoskeleton. It is found in the microtubule organizing center. The protein localises to the centrosome. It localises to the spindle. Its subcellular location is the early endosome. Minus end-directed microtubule-dependent motor required for bipolar spindle formation. May contribute to movement of early endocytic vesicles. Regulates cilium formation and structure. The sequence is that of Kinesin-like protein KIFC1 from Mus musculus (Mouse).